The chain runs to 265 residues: Urease accessory protein UreH (265 aa).

It belongs to the UreD family. As to quaternary structure, ureH, UreF and UreG form a complex that acts as a GTP-hydrolysis-dependent molecular chaperone, activating the urease apoprotein by helping to assemble the nickel containing metallocenter of UreC. The UreE protein probably delivers the nickel.

The protein resides in the cytoplasm. Functionally, required for maturation of urease via the functional incorporation of the urease nickel metallocenter. This chain is Urease accessory protein UreH, found in Helicobacter pylori (strain HPAG1).